The primary structure comprises 407 residues: Resuscitation-promoting factor RpfA (407 aa).

The N-terminal stretch at 1-33 (MSGRHRKPTTSNVSVAKIAFTGAVLGGGGIAMA) is a signal peptide. 2 disordered regions span residues 142-253 (VNGE…ADLA) and 271-371 (LPAA…AETP). Residues 148–159 (PLAPPPADPAPP) are compositionally biased toward pro residues. The span at 160–170 (VELAANDLPAP) shows a compositional bias: low complexity. Over residues 171-193 (LGEPLPAAPADPAPPADLAPPAP) the composition is skewed to pro residues. Repeat copies occupy residues 178–185 (APADPAPP) and 186–193 (ADLAPPAP). Positions 178–359 (APADPAPPAD…PDPQPADAPP (182 aa)) are 12 X 8 AA approximate repeats of A-P-A-D-L-A-P-P. Positions 194-210 (ADVAPPVELAVNDLPAP) are enriched in low complexity. The segment covering 211-249 (LGEPLPAAPADPAPPADLAPPAPADLAPPAPADLAPPAP) has biased composition (pro residues). 10 repeat units span residues 218-225 (APADPAPP), 226-233 (ADLAPPAP), 240-247 (APADLAPP), 248-255 (APADLAPP), 274-281 (APAELAPP), 287-294 (ASADLAPP), 295-302 (APADLAPP), 303-310 (APAELAPP), 311-318 (APADLAPP), and 353-359 (QPADAPP). Over residues 274-292 (APAELAPPADLAPASADLA) the composition is skewed to low complexity. Pro residues-rich tracts occupy residues 293–312 (PPAPADLAPPAPAELAPPAP) and 350–361 (PDPQPADAPPPG).

The protein belongs to the transglycosylase family. Rpf subfamily.

Its function is as follows. Factor that stimulates resuscitation of dormant cells. Has peptidoglycan (PG) hydrolytic activity. This is Resuscitation-promoting factor RpfA (rpfA) from Mycobacterium tuberculosis (strain CDC 1551 / Oshkosh).